Consider the following 577-residue polypeptide: MLFSKLFAPTLKEPPKDAVLKSHKHLAQAGYIYQVGSGIYNFLPLAKKVLDKIENITHKRMQEHGAQNILMSFVVLASLWEKSGRLDKYGKELLVFKDRKDNDFVLSPTLEENITEIAANFIKSYKQLPVHLYQIHTKFRDEIRPRFGLVRAREFIMKDGYSFHEDAESLDKEFLNTQSAYKEILSDLGLDFRIVEADSGAIGGSKSREFVVLTECGEDTIVVCKNCDYAANIEIAKRSKRPEPLNVPKAQLAKFPTPNTTSAQSVAEFFKTEPYFVLKALVRKVIHKDKETLACFFVRGDDNLEEVKALNALNLLGANALELREASKEDLNNAGLIAGFIGPYGLKKHVSYIIFDEDLKEGDCLIVGANEKDFHAVGVDLKGFENLVYADIVQVKESDHCPDCQGELKYHKSLEVGHIFKLGQGYAKSLKASFLDKNGKERFFEMGCYGIGISRLLSAILEQKSDDLGCVWTKNTAPFDVVIVVSNWKDEAQKKLAFEVYERLRQKGVDALLDDRDARFGAKMRDFELIGERLALIVGKQTLESKEFECIKRANLEKQTLKDTELEEKILEMLKSE.

This sequence belongs to the class-II aminoacyl-tRNA synthetase family. ProS type 1 subfamily. Homodimer.

It is found in the cytoplasm. The catalysed reaction is tRNA(Pro) + L-proline + ATP = L-prolyl-tRNA(Pro) + AMP + diphosphate. Functionally, catalyzes the attachment of proline to tRNA(Pro) in a two-step reaction: proline is first activated by ATP to form Pro-AMP and then transferred to the acceptor end of tRNA(Pro). As ProRS can inadvertently accommodate and process non-cognate amino acids such as alanine and cysteine, to avoid such errors it has two additional distinct editing activities against alanine. One activity is designated as 'pretransfer' editing and involves the tRNA(Pro)-independent hydrolysis of activated Ala-AMP. The other activity is designated 'posttransfer' editing and involves deacylation of mischarged Ala-tRNA(Pro). The misacylated Cys-tRNA(Pro) is not edited by ProRS. The polypeptide is Proline--tRNA ligase (Helicobacter pylori (strain Shi470)).